The following is a 938-amino-acid chain: Isoleucine--tRNA ligase (938 aa).

Residues 58–68 (PYANGSIHIGH) carry the 'HIGH' region motif. An L-isoleucyl-5'-AMP-binding site is contributed by Glu-561. Residues 602–606 (KMSKS) carry the 'KMSKS' region motif. Lys-605 contacts ATP. 4 residues coordinate Zn(2+): Cys-901, Cys-904, Cys-921, and Cys-924.

This sequence belongs to the class-I aminoacyl-tRNA synthetase family. IleS type 1 subfamily. In terms of assembly, monomer. Zn(2+) is required as a cofactor.

The protein resides in the cytoplasm. It carries out the reaction tRNA(Ile) + L-isoleucine + ATP = L-isoleucyl-tRNA(Ile) + AMP + diphosphate. Functionally, catalyzes the attachment of isoleucine to tRNA(Ile). As IleRS can inadvertently accommodate and process structurally similar amino acids such as valine, to avoid such errors it has two additional distinct tRNA(Ile)-dependent editing activities. One activity is designated as 'pretransfer' editing and involves the hydrolysis of activated Val-AMP. The other activity is designated 'posttransfer' editing and involves deacylation of mischarged Val-tRNA(Ile). In Erwinia tasmaniensis (strain DSM 17950 / CFBP 7177 / CIP 109463 / NCPPB 4357 / Et1/99), this protein is Isoleucine--tRNA ligase.